The following is a 605-amino-acid chain: Elongation factor 4 (605 aa).

Residues 9 to 192 (HHIRNFCIIA…AIVKRVPAPS (184 aa)) enclose the tr-type G domain. GTP-binding positions include 21–26 (DHGKST) and 139–142 (NKID).

Belongs to the TRAFAC class translation factor GTPase superfamily. Classic translation factor GTPase family. LepA subfamily.

It is found in the cell inner membrane. It carries out the reaction GTP + H2O = GDP + phosphate + H(+). Required for accurate and efficient protein synthesis under certain stress conditions. May act as a fidelity factor of the translation reaction, by catalyzing a one-codon backward translocation of tRNAs on improperly translocated ribosomes. Back-translocation proceeds from a post-translocation (POST) complex to a pre-translocation (PRE) complex, thus giving elongation factor G a second chance to translocate the tRNAs correctly. Binds to ribosomes in a GTP-dependent manner. This chain is Elongation factor 4, found in Chlorobium phaeobacteroides (strain DSM 266 / SMG 266 / 2430).